The sequence spans 523 residues: MFS-type transporter R5 (523 aa).

The tract at residues Gln-19–Glu-42 is disordered. Over residues Asn-21–Ser-38 the composition is skewed to polar residues. N-linked (GlcNAc...) asparagine glycans are attached at residues Asn-35, Asn-94, and Asn-143. A run of 2 helical transmembrane segments spans residues Ala-183–Leu-203 and Ala-211–Phe-231. Asn-235 and Asn-250 each carry an N-linked (GlcNAc...) asparagine glycan. Helical transmembrane passes span Phe-291–Phe-311, Tyr-319–Leu-339, Leu-381–Leu-401, Val-408–Ala-428, Ala-443–Val-463, and Ile-470–Leu-490.

It belongs to the major facilitator superfamily.

The protein resides in the membrane. MFS-type transporter; part of the gene cluster that mediates the biosynthesis of squalestatin S1 (SQS1, also known as zaragozic acid A), a heavily oxidized fungal polyketide that offers potent cholesterol lowering activity by targeting squalene synthase (SS). The chain is MFS-type transporter R5 from Phoma sp. (strain ATCC 20986 / MF5453).